Consider the following 529-residue polypeptide: Beta-hexosaminidase subunit alpha (529 aa).

The signal sequence occupies residues 1–22 (MTSSRLWFSLLLAAAFAGRATA). Residues 23-88 (LWPWPQNFQT…PRPYLTGKRH (66 aa)) constitute a propeptide that is removed on maturation. A disulfide bridge links Cys-58 with Cys-104. Asn-115, Asn-157, and Asn-295 each carry an N-linked (GlcNAc...) asparagine glycan. A disulfide bond links Cys-277 and Cys-328. Glu-323 functions as the Proton donor in the catalytic mechanism. The tract at residues 423-424 (NR) is critical for hydrolysis GM2 gangliosides. Cys-505 and Cys-522 are joined by a disulfide.

It belongs to the glycosyl hydrolase 20 family. There are 3 beta-hexosaminidase isozymes: isozyme A (hexosaminidase A) is a heterodimer composed of one subunit alpha and one subunit beta (chain A and B); isozyme B (hexosaminidase B) is a homodimer of two beta subunits (two chains A and B); isozyme S (hexosaminidase S) is a homodimer of two alpha subunits. The composition of the dimer (isozyme A versus isozyme S) has a significant effect on the substrate specificity of the alpha subunit active site. In terms of processing, N-linked glycan at Asn-115 consists of Man(3)-GlcNAc(2). N-linked glycan at Asn-157 consists of either GlcNAc or GlcNAc(2)-Man(7-9). N-linked glycan at Asn-295 consists of either GlcNAc, GlcNAc-Fuc, or GlcNAc(2)-Man(4).

The protein localises to the lysosome. It catalyses the reaction Hydrolysis of terminal non-reducing N-acetyl-D-hexosamine residues in N-acetyl-beta-D-hexosaminides.. The catalysed reaction is N-acetyl-beta-D-galactosaminyl-(1-&gt;4)-beta-D-3-sulfogalactosyl-(1-&gt;4)-beta-D-glucosyl-(1&lt;-&gt;1')-ceramide + H2O = a beta-D-3-sulfogalactosyl-(1-&gt;4)-beta-D-glucosyl-(1&lt;-&gt;1')-ceramide + N-acetyl-beta-D-galactosamine. The enzyme catalyses a ganglioside GM2 (d18:1(4E)) + H2O = a ganglioside GM3 (d18:1(4E)) + N-acetyl-beta-D-galactosamine. It carries out the reaction a ganglioside GM2 + H2O = a ganglioside GM3 + N-acetyl-beta-D-galactosamine. It catalyses the reaction beta-D-GalNAc-(1-&gt;4)-alpha-L-IdoA-(1-&gt;3)-beta-D-GalNAc-4-sulfate-(1-&gt;4)-alpha-L-IdoA-(1-&gt;3)-D-GalNAc-4-sulfate + H2O = alpha-L-IdoA-(1-&gt;3)-beta-D-GalNAc-4-sulfate-(1-&gt;4)-alpha-L-IdoA-(1-&gt;3)-D-GalNAc-4-sulfate + N-acetyl-D-galactosamine. The catalysed reaction is N-acetyl-beta-D-6-sulfogalactosaminyl-(1-&gt;4)-alpha-L-iduronyl-(1-&gt;3)-N-acetyl-D-6-sulfogalactosamine + H2O = alpha-L-iduronyl-(1-&gt;3)-N-acetyl-D-6-sulfogalactosamine + N-acetyl-D-6-sulfogalactosamine. Addition of GM2A stimulates the hydrolysis of sulfated glycosphingolipid SM2 and the ganglioside GM2. Hydrolyzes the non-reducing end N-acetyl-D-hexosamine and/or sulfated N-acetyl-D-hexosamine of glycoconjugates, such as the oligosaccharide moieties from proteins and neutral glycolipids, or from certain mucopolysaccharides. The isozyme S is as active as the isozyme A on the anionic bis-sulfated glycans, the chondroitin-6-sulfate trisaccharide (C6S-3), and the dermatan sulfate pentasaccharide, and the sulfated glycosphingolipid SM2. The isozyme B does not hydrolyze each of these substrates, however hydrolyzes efficiently neutral oligosaccharide. Only the isozyme A is responsible for the degradation of GM2 gangliosides in the presence of GM2A. The chain is Beta-hexosaminidase subunit alpha from Homo sapiens (Human).